We begin with the raw amino-acid sequence, 137 residues long: Putative pre-16S rRNA nuclease (137 aa).

It belongs to the YqgF nuclease family.

The protein resides in the cytoplasm. In terms of biological role, could be a nuclease involved in processing of the 5'-end of pre-16S rRNA. The sequence is that of Putative pre-16S rRNA nuclease from Actinobacillus pleuropneumoniae serotype 5b (strain L20).